The chain runs to 447 residues: Nuclear envelope integral membrane protein 2 (447 aa).

An N-terminal signal peptide occupies residues 1–28; sequence MGPRRLPWARPGPALGLLLLALAGAVPA. 5 helical membrane-spanning segments follow: residues 144–164, 173–193, 202–222, 235–255, and 275–295; these read EMLD…FHFA, FFYL…VLLA, STFW…IYCF, IYVL…CYQH, and AFVF…IIAV. A disordered region spans residues 410–438; sequence TRTESEQDETTSYIHEGDDENEDEIHEPI.

This sequence belongs to the NEMP family.

Its subcellular location is the nucleus inner membrane. This Gallus gallus (Chicken) protein is Nuclear envelope integral membrane protein 2 (NEMP2).